The primary structure comprises 129 residues: Glycine cleavage system H protein (129 aa).

Residues 24-106 (TFTVGISEHA…YGDGWLFRIK (83 aa)) enclose the Lipoyl-binding domain. At lysine 65 the chain carries N6-lipoyllysine.

This sequence belongs to the GcvH family. The glycine cleavage system is composed of four proteins: P, T, L and H. The cofactor is (R)-lipoate.

In terms of biological role, the glycine cleavage system catalyzes the degradation of glycine. The H protein shuttles the methylamine group of glycine from the P protein to the T protein. This Idiomarina loihiensis (strain ATCC BAA-735 / DSM 15497 / L2-TR) protein is Glycine cleavage system H protein.